The primary structure comprises 197 residues: Holliday junction branch migration complex subunit RuvA (197 aa).

Positions 1–64 (MIGHLEGRLR…EDAIQLYGFR (64 aa)) are domain I. A domain II region spans residues 65–143 (TVAEKDMFLR…VKKGREAEQP (79 aa)). A flexible linker region spans residues 144–145 (AP). Positions 146-197 (AAESSYGDAYSALVNLGYRPAEAEKALGKAIKSLGADPPVEKLLKETLRLLA) are domain III.

It belongs to the RuvA family. Homotetramer. Forms an RuvA(8)-RuvB(12)-Holliday junction (HJ) complex. HJ DNA is sandwiched between 2 RuvA tetramers; dsDNA enters through RuvA and exits via RuvB. An RuvB hexamer assembles on each DNA strand where it exits the tetramer. Each RuvB hexamer is contacted by two RuvA subunits (via domain III) on 2 adjacent RuvB subunits; this complex drives branch migration. In the full resolvosome a probable DNA-RuvA(4)-RuvB(12)-RuvC(2) complex forms which resolves the HJ.

It is found in the cytoplasm. The RuvA-RuvB-RuvC complex processes Holliday junction (HJ) DNA during genetic recombination and DNA repair, while the RuvA-RuvB complex plays an important role in the rescue of blocked DNA replication forks via replication fork reversal (RFR). RuvA specifically binds to HJ cruciform DNA, conferring on it an open structure. The RuvB hexamer acts as an ATP-dependent pump, pulling dsDNA into and through the RuvAB complex. HJ branch migration allows RuvC to scan DNA until it finds its consensus sequence, where it cleaves and resolves the cruciform DNA. This is Holliday junction branch migration complex subunit RuvA from Syntrophobacter fumaroxidans (strain DSM 10017 / MPOB).